The sequence spans 76 residues: Small ribosomal subunit protein bS18 (76 aa).

Belongs to the bacterial ribosomal protein bS18 family. Part of the 30S ribosomal subunit. Forms a tight heterodimer with protein bS6.

Functionally, binds as a heterodimer with protein bS6 to the central domain of the 16S rRNA, where it helps stabilize the platform of the 30S subunit. This is Small ribosomal subunit protein bS18 from Pseudomonas fluorescens (strain ATCC BAA-477 / NRRL B-23932 / Pf-5).